Consider the following 267-residue polypeptide: Undecaprenyl-diphosphatase (267 aa).

A run of 7 helical transmembrane segments spans residues M1–I21, A39–Y59, A85–V105, L117–G137, F189–L209, L220–I240, and V246–F266.

Belongs to the UppP family.

It localises to the cell inner membrane. It catalyses the reaction di-trans,octa-cis-undecaprenyl diphosphate + H2O = di-trans,octa-cis-undecaprenyl phosphate + phosphate + H(+). In terms of biological role, catalyzes the dephosphorylation of undecaprenyl diphosphate (UPP). Confers resistance to bacitracin. The chain is Undecaprenyl-diphosphatase from Dichelobacter nodosus (strain VCS1703A).